Here is a 637-residue protein sequence, read N- to C-terminus: 1-deoxy-D-xylulose-5-phosphate synthase (637 aa).

Thiamine diphosphate contacts are provided by residues histidine 73 and serine 113–alanine 115. Aspartate 145 is a binding site for Mg(2+). Thiamine diphosphate contacts are provided by residues glycine 146–alanine 147, asparagine 175, tyrosine 286, and glutamate 367. Asparagine 175 serves as a coordination point for Mg(2+).

It belongs to the transketolase family. DXPS subfamily. Homodimer. Mg(2+) is required as a cofactor. Thiamine diphosphate serves as cofactor.

The catalysed reaction is D-glyceraldehyde 3-phosphate + pyruvate + H(+) = 1-deoxy-D-xylulose 5-phosphate + CO2. It participates in metabolic intermediate biosynthesis; 1-deoxy-D-xylulose 5-phosphate biosynthesis; 1-deoxy-D-xylulose 5-phosphate from D-glyceraldehyde 3-phosphate and pyruvate: step 1/1. Functionally, catalyzes the acyloin condensation reaction between C atoms 2 and 3 of pyruvate and glyceraldehyde 3-phosphate to yield 1-deoxy-D-xylulose-5-phosphate (DXP). In Thermobifida fusca (strain YX), this protein is 1-deoxy-D-xylulose-5-phosphate synthase.